Consider the following 119-residue polypeptide: Large ribosomal subunit protein bL20 (119 aa).

The protein belongs to the bacterial ribosomal protein bL20 family.

Its function is as follows. Binds directly to 23S ribosomal RNA and is necessary for the in vitro assembly process of the 50S ribosomal subunit. It is not involved in the protein synthesizing functions of that subunit. This Alkaliphilus metalliredigens (strain QYMF) protein is Large ribosomal subunit protein bL20.